We begin with the raw amino-acid sequence, 283 residues long: Malonyl-[acyl-carrier protein] O-methyltransferase (283 aa).

This sequence belongs to the methyltransferase superfamily.

The enzyme catalyses malonyl-[ACP] + S-adenosyl-L-methionine = malonyl-[ACP] methyl ester + S-adenosyl-L-homocysteine. Its pathway is cofactor biosynthesis; biotin biosynthesis. Its function is as follows. Converts the free carboxyl group of a malonyl-thioester to its methyl ester by transfer of a methyl group from S-adenosyl-L-methionine (SAM). It allows to synthesize pimeloyl-ACP via the fatty acid synthetic pathway. This is Malonyl-[acyl-carrier protein] O-methyltransferase from Acetivibrio thermocellus (strain ATCC 27405 / DSM 1237 / JCM 9322 / NBRC 103400 / NCIMB 10682 / NRRL B-4536 / VPI 7372) (Clostridium thermocellum).